The sequence spans 251 residues: MSLLLENLIEEDTIFFAGSISEYDDLQMVIAGAKSKFPRSMLSIFNIVPRTMSKYELELIHNENITGAMFTTMYNIRNNLGLGDDKLTIEAIENYFLDPNNEVMPLIINNTDMTAVIPKKSGRRKNKNMVIFRQGSSPILCIFETRKKINIYKENMESASTEYTPIGDNKALISKYAGINVLNVYSPSTSMRLNAIYGFTNKNKLEKLSTNKELESYSSSPLQEPIRLNDFLGLLECVKKNIPLTDIPTKD.

Residues M1–G32 constitute a propeptide, removed by core protease OPG083/I7.

Belongs to the orthopoxvirus OPG098 family. In terms of processing, undergoes morphogenesis-associated proteolysis which cleaves the 28 kDa to a 25-kDa product. Proteolytic cleavage of major core proteins P4a (OPG136), P4b (OPG129), and VP8 (OPG098), which occurs at a late stage of core formation, is required for production of infectious mature virions (MV).

The protein localises to the virion. It localises to the host cytoplasm. Functionally, major core structural protein. The sequence is that of Core protein VP8 (OPG098) from Vaccinia virus (strain Copenhagen) (VACV).